Here is a 573-residue protein sequence, read N- to C-terminus: MGFRINTNIGALNAHANSVVNARELDKSLSRLSSGLRINSAADDASGMAIADSLRSQAATLGQAINNGNDAIGILQTADKAMDEQLKILDTIKTKATQAAQDGQSLKTRTMLQADINRLMEELDNIANTTSFNGKQLLSGGFTNQEFQIGSSSNQTIKASIGATQSSKIGVTRFETGSQSFSSGTVGLTIKNYNGIEDFKFDSVVISTSVGTGLGALAEEINRNADKTGIRATFDVKSVGAYAIKAGNTSQDFAINGVVIGQINYNDGDNNGQLISAINAVKDTTGVQASKDENGKLVLTSADGRGIKITGSIGVGAGILHTENYGRLSLVKNDGRDINISGTGLSAIGMGATDMISQSSVSLRESKGQISAANADAMGFNAYNGGGAKQIIFASSIAGFMSQAGSGFSAGSGFSVGSGKNYSAILSASIQIVSSARSISSTYVVSTGSGFSAGSGNSQFAALRISTVSAHDETAGVTTLKGAMAVMDIAETAITNLDQIRADIGAVQNQLQVTINNITVTQVNVKAAESTIRDVDFAAESANFSKYNILAQSGSYAMSQRNAVQQNVLKLLQ.

The protein belongs to the bacterial flagellin family. As to quaternary structure, heteromer of FlaA and FlaB. A flagellar filament composed exclusively of FlaA is indistinguishable in length from that of the wild-type and shows a slight reduction in motility. The flagellar filament composed exclusively of the FlaB is severely truncated in length and greatly reduced in motility. Thus, while both flagellins are not necessary for motility, both are required for a fully active flagellar filament.

The protein resides in the secreted. It localises to the bacterial flagellum. Functionally, flagellin is the subunit protein which polymerizes to form the filaments of bacterial flagella. The chain is Flagellin B (flaB) from Campylobacter coli.